The following is a 517-amino-acid chain: MATILLLLLGLLVGLPLLRAHGVTGSAAPTPPPLPVLPVPSYAQLQWQLSEMALFLHFGPNTFTDSEWGSVRADPAVFAPSALDAGQWARAAAAGGFGRVVLTAKHHDGFCLWPSALTNYSVAASPWKGGAGDVVGELAAAARAEGIGLGLYLSPWDRHEPVYGDTVAYNEHYLGQMTELLTRYGDVEEVWLDGAKGEGKDMDYMFDAWFALIHQLQQRVVIFSDAGPDTRWVGDEAGVAGYTCWSPFNKSTVTIGHIIPEYSRCGDPFGQDWVPAECDVSIRPGWFWHASEKPKNATTLLDIYYKSVGRNCLLILNVPPNSSGLISTEDMQVLQEFTEIRQTIFSQNFAANATVTASTVRGGLGNQQFAPSNVLQESIYSYWAPEEGQSSWEMLFDLGQSASFNVIQLQEPIQMGQRVIKFRVEILVDELWQTIVEGTTIGYKRLFQFPVVEGQFLKLSIDGARADPLISFFGVFTDSFSVTYSLENHEKPSVVNSSEVIMLRTDHSFGNKSIATM.

Residues 1–20 (MATILLLLLGLLVGLPLLRA) form the signal peptide. N119, N249, N296, N321, N352, N496, and N511 each carry an N-linked (GlcNAc...) asparagine glycan.

Belongs to the glycosyl hydrolase 29 family.

It is found in the secreted. It localises to the extracellular space. Its subcellular location is the apoplast. The catalysed reaction is an alpha-L-fucoside + H2O = L-fucose + an alcohol. Functionally, alpha-L-fucosidase is responsible for hydrolyzing the alpha-1,6-linked fucose joined to the reducing-end N-acetylglucosamine of the carbohydrate moieties of glycoproteins. Active only against 2'-fucosyl-lactitol when heterologously expressed. This chain is Putative alpha-L-fucosidase 1, found in Oryza sativa subsp. japonica (Rice).